The primary structure comprises 151 residues: Putative pre-16S rRNA nuclease (151 aa).

This sequence belongs to the YqgF nuclease family.

Its subcellular location is the cytoplasm. Its function is as follows. Could be a nuclease involved in processing of the 5'-end of pre-16S rRNA. This is Putative pre-16S rRNA nuclease from Bifidobacterium longum subsp. infantis (strain ATCC 15697 / DSM 20088 / JCM 1222 / NCTC 11817 / S12).